Here is a 453-residue protein sequence, read N- to C-terminus: MHGSTGFVQGTRPAGDQADPLPVVRVSSESMTRYALYFTPVDDSPWAQAGSSWLGRHPASPEPVQQVNIPGIPRILLSSLTADARRYGFHATLKAPFRLFEGFNEEHLLQMARAFCAAQKAIVLDEVRVRPLMDFLALQVNGPLDEIGGLAMRCVTYFDLLRAPLTEPELAKRRRAGLNARQSALLQRWGYPYTEEFYRFHMTLTDALMHADADVIFTIRKAAEQHFAAAVAAVPLAIDALTIAREEYPGAPFVEWQRIPFSGQGERASLPHSGRIFFCVGPSGVGKDSLLNWVREHSAGDEKLVFAQRTITRATQANEAHEAVDTASFWRLAAGGQFAMVWQANDLCYGIRRGIEADLKAGRDVVINGSRAYVPQLLQAFPDAIVIWIDASENLLRERLEARQREQGPALLKRLKRAKEFAPSEQAQVIRLDNSGALEAGGQKLLDILRQAK.

A disordered region spans residues 1-21 (MHGSTGFVQGTRPAGDQADPL). Positions 1–271 (MHGSTGFVQG…SGQGERASLP (271 aa)) are unknown. Residues 272–453 (HSGRIFFCVG…KLLDILRQAK (182 aa)) are ribose 1,5-bisphosphokinase.

The protein in the C-terminal section; belongs to the ribose 1,5-bisphosphokinase family.

The enzyme catalyses alpha-D-ribose 1,5-bisphosphate + ATP = 5-phospho-alpha-D-ribose 1-diphosphate + ADP. The protein operates within metabolic intermediate biosynthesis; 5-phospho-alpha-D-ribose 1-diphosphate biosynthesis; 5-phospho-alpha-D-ribose 1-diphosphate from D-ribose 5-phosphate (route II): step 3/3. Its function is as follows. Catalyzes the phosphorylation of ribose 1,5-bisphosphate to 5-phospho-D-ribosyl alpha-1-diphosphate (PRPP). The sequence is that of Ribose 1,5-bisphosphate phosphokinase PhnN (phnN) from Janthinobacterium sp. (strain Marseille) (Minibacterium massiliensis).